We begin with the raw amino-acid sequence, 316 residues long: MKVLWVAVVVALLAGCQADMEGELGPEEPLTTQQPRGKDSQPWEQALGRFWDYLRWVQTLSDQVQEELLNTQVIQELTALMEETMKEVKAYKEELEGQLGPMAQETQARVSKELQAAQARLGSDMEDLRNRLAQYRSEVQAMLGQSTEELRARMASHLRKLRKRLLRDADDLKKRLAVYQAGASEGAERSLSAVRERFGPLVEQGQSRAATLSTLAGQPLLERAEAWRQKLHGRLEEVGVRAQDRLDKIRQQLEEVHAKVEEQGNQMRLQAEAFQARLRSWFEPLVEDMQRQWAGLVEKVQLALRPSPTSPPSENH.

Positions 1 to 18 (MKVLWVAVVVALLAGCQA) are cleaved as a signal peptide. 8 tandem repeats follow at residues 79–100 (ALMEETMKEVKAYKEELEGQLG), 101–122 (PMAQETQARVSKELQAAQARLG), 123–144 (SDMEDLRNRLAQYRSEVQAMLG), 145–166 (QSTEELRARMASHLRKLRKRLL), 167–188 (RDADDLKKRLAVYQAGASEGAE), 189–210 (RSLSAVRERFGPLVEQGQSRAA), 211–232 (TLSTLAGQPLLERAEAWRQKLH), and 233–254 (GRLEEVGVRAQDRLDKIRQQLE). An 8 X 22 AA approximate tandem repeats region spans residues 79–254 (ALMEETMKEV…RLDKIRQQLE (176 aa)). Methionine 142 is modified (methionine sulfoxide). The residue at position 146 (serine 146) is a Phosphoserine; by FAM20C. The LDL and other lipoprotein receptors binding stretch occupies residues 157 to 167 (HLRKLRKRLLR). 161–164 (LRKR) provides a ligand contact to heparin. The interval 209–289 (AATLSTLAGQ…SWFEPLVEDM (81 aa)) is lipid-binding and lipoprotein association. Threonine 211 carries an O-linked (GalNAc...) threonine glycan. Heparin is bound at residue 228–235 (RQKLHGRL). Positions 265 to 316 (NQMRLQAEAFQARLRSWFEPLVEDMQRQWAGLVEKVQLALRPSPTSPPSENH) are homooligomerization. Residues 277-289 (RLRSWFEPLVEDM) form a specificity for association with VLDL region.

Belongs to the apolipoprotein A1/A4/E family. As to quaternary structure, homotetramer. May interact with ABCA1; functionally associated with ABCA1 in the biogenesis of HDLs. May interact with APP/A4 amyloid-beta peptide; the interaction is extremely stable in vitro but its physiological significance is unclear. May interact with MAPT. May interact with MAP2. In the cerebrospinal fluid, interacts with secreted SORL1. Interacts with PMEL; this allows the loading of PMEL luminal fragment on ILVs to induce fibril nucleation. Post-translationally, APOE exists as multiple glycosylated and sialylated glycoforms within cells and in plasma. The extent of glycosylation and sialylation are tissue and context specific. Glycated in plasma VLDL. In terms of processing, phosphorylated by FAM20C in the extracellular medium.

It localises to the secreted. Its subcellular location is the extracellular space. The protein localises to the extracellular matrix. It is found in the extracellular vesicle. The protein resides in the endosome. It localises to the multivesicular body. In terms of biological role, APOE is an apolipoprotein, a protein associating with lipid particles, that mainly functions in lipoprotein-mediated lipid transport between organs via the plasma and interstitial fluids. APOE is a core component of plasma lipoproteins and is involved in their production, conversion and clearance. Apolipoproteins are amphipathic molecules that interact both with lipids of the lipoprotein particle core and the aqueous environment of the plasma. As such, APOE associates with chylomicrons, chylomicron remnants, very low density lipoproteins (VLDL) and intermediate density lipoproteins (IDL) but shows a preferential binding to high-density lipoproteins (HDL). It also binds a wide range of cellular receptors including the LDL receptor/LDLR and the very low-density lipoprotein receptor/VLDLR that mediate the cellular uptake of the APOE-containing lipoprotein particles. Finally, APOE also has a heparin-binding activity and binds heparan-sulfate proteoglycans on the surface of cells, a property that supports the capture and the receptor-mediated uptake of APOE-containing lipoproteins by cells. The sequence is that of Apolipoprotein E (APOE) from Bos mutus grunniens (Wild yak).